The sequence spans 1108 residues: Probable E3 ubiquitin ligase SUD1 (1108 aa).

The tract at residues 1-60 is disordered; the sequence is MEISPADSLSISGAAASEVVSEPSVSSSSSSSSPNQASPNPFSNMDPAVSTATGSRYVDD. Low complexity predominate over residues 10–44; sequence SISGAAASEVVSEPSVSSSSSSSSPNQASPNPFSN. An RING-CH-type zinc finger spans residues 60-121; it reads DDEDEEDVCR…EVCKHPFSFS (62 aa). The Zn(2+) site is built by cysteine 68, cysteine 71, cysteine 85, cysteine 87, histidine 95, cysteine 98, cysteine 111, and cysteine 114. The next 2 membrane-spanning stretches (helical) occupy residues 157-177 and 197-217; these read FVLS…WRLA and VILT…FIFL. Residues 237-246 show a composition bias toward basic and acidic residues; the sequence is ERDDDVDRNG. A disordered region spans residues 237–273; sequence ERDDDVDRNGARAARRPAGQANRNLAGEGNGEDAGDQ. The stretch at 286–308 forms a coiled coil; that stretch reads ENVLARLDIQAARLEAQVEQMFD. The next 8 membrane-spanning stretches (helical) occupy residues 339–359, 362–382, 462–482, 489–509, 525–545, 572–592, 630–650, and 669–689; these read FTVL…PFTL, IILY…VAAS, AVGY…IALI, PLTV…PSLL, VAFL…WWLD, LVHW…VSLL, VLLS…LPVK, and PFTE…FIIE. The tract at residues 762 to 784 is disordered; it reads PNRSRLRAGNVNTGEEYEDDDEQ. 6 consecutive transmembrane segments (helical) span residues 796–816, 844–864, 894–914, 923–943, 982–1002, and 1017–1036; these read IILL…ALIV, YAFV…RYAI, AIWV…LVIV, SPVF…KIWT, EIVF…YVLA, and SAVY…FCFC.

Expressed in cotyledons, leaves, roots, stems, inflorescences and siliques. Expression higher at the top than at the base of the stem.

The protein localises to the membrane. The enzyme catalyses S-ubiquitinyl-[E2 ubiquitin-conjugating enzyme]-L-cysteine + [acceptor protein]-L-lysine = [E2 ubiquitin-conjugating enzyme]-L-cysteine + N(6)-ubiquitinyl-[acceptor protein]-L-lysine.. Its pathway is protein modification; protein ubiquitination. In terms of biological role, probable E3 ubiquitin ligase acting as a positive post-transcriptional regulator of 3-hydroxy-3-methylglutaryl-coenzyme A reductase activity. Might be involved in the quality control that degrades misfolded proteins. The sequence is that of Probable E3 ubiquitin ligase SUD1 (SUD1) from Arabidopsis thaliana (Mouse-ear cress).